A 293-amino-acid chain; its full sequence is 4-hydroxy-tetrahydrodipicolinate synthase 1 (293 aa).

T46 contacts pyruvate. Y134 functions as the Proton donor/acceptor in the catalytic mechanism. K162 acts as the Schiff-base intermediate with substrate in catalysis. Pyruvate is bound at residue I204.

It belongs to the DapA family. Homotetramer; dimer of dimers.

The protein localises to the cytoplasm. It catalyses the reaction L-aspartate 4-semialdehyde + pyruvate = (2S,4S)-4-hydroxy-2,3,4,5-tetrahydrodipicolinate + H2O + H(+). Its pathway is amino-acid biosynthesis; L-lysine biosynthesis via DAP pathway; (S)-tetrahydrodipicolinate from L-aspartate: step 3/4. In terms of biological role, catalyzes the condensation of (S)-aspartate-beta-semialdehyde [(S)-ASA] and pyruvate to 4-hydroxy-tetrahydrodipicolinate (HTPA). This Clostridium acetobutylicum (strain ATCC 824 / DSM 792 / JCM 1419 / IAM 19013 / LMG 5710 / NBRC 13948 / NRRL B-527 / VKM B-1787 / 2291 / W) protein is 4-hydroxy-tetrahydrodipicolinate synthase 1.